The chain runs to 414 residues: Serine hydroxymethyltransferase (414 aa).

(6S)-5,6,7,8-tetrahydrofolate is bound by residues Leu121 and Gly125–Leu127. Lys229 carries the N6-(pyridoxal phosphate)lysine modification.

Belongs to the SHMT family. In terms of assembly, homodimer. Requires pyridoxal 5'-phosphate as cofactor.

The protein resides in the cytoplasm. The enzyme catalyses (6R)-5,10-methylene-5,6,7,8-tetrahydrofolate + glycine + H2O = (6S)-5,6,7,8-tetrahydrofolate + L-serine. It functions in the pathway one-carbon metabolism; tetrahydrofolate interconversion. It participates in amino-acid biosynthesis; glycine biosynthesis; glycine from L-serine: step 1/1. Functionally, catalyzes the reversible interconversion of serine and glycine with tetrahydrofolate (THF) serving as the one-carbon carrier. This reaction serves as the major source of one-carbon groups required for the biosynthesis of purines, thymidylate, methionine, and other important biomolecules. Also exhibits THF-independent aldolase activity toward beta-hydroxyamino acids, producing glycine and aldehydes, via a retro-aldol mechanism. In Polynucleobacter asymbioticus (strain DSM 18221 / CIP 109841 / QLW-P1DMWA-1) (Polynucleobacter necessarius subsp. asymbioticus), this protein is Serine hydroxymethyltransferase.